The primary structure comprises 1486 residues: Chromosome partition protein MukB (1486 aa).

An ATP-binding site is contributed by Gly-34 to Ser-41. Coiled coils occupy residues Leu-326–Gln-418, Leu-444–Gln-480, and Arg-509–Val-603. A flexible hinge region spans residues Pro-666–Arg-783. Coiled coils occupy residues Glu-835 to Glu-923, Glu-977 to Ala-1115, and Val-1209 to Ser-1266.

It belongs to the SMC family. MukB subfamily. Homodimerization via its hinge domain. Binds to DNA via its C-terminal region. Interacts, and probably forms a ternary complex, with MukE and MukF via its C-terminal region. The complex formation is stimulated by calcium or magnesium. Interacts with tubulin-related protein FtsZ.

It is found in the cytoplasm. The protein resides in the nucleoid. Its function is as follows. Plays a central role in chromosome condensation, segregation and cell cycle progression. Functions as a homodimer, which is essential for chromosome partition. Involved in negative DNA supercoiling in vivo, and by this means organize and compact chromosomes. May achieve or facilitate chromosome segregation by condensation DNA from both sides of a centrally located replisome during cell division. The protein is Chromosome partition protein MukB of Escherichia coli (strain SMS-3-5 / SECEC).